The chain runs to 126 residues: MDDICSMAENINRTLFNILGTEIDEINLNTNNLYNFIMESNLTKVEQHTLHKNISNNRLEIYHHIKKEKSPKGKSSISPQARAFLEQVFRRKQSLNSKEKEEVAKKCGITPLQVRVWFINKRMRSK.

The segment at residues Ser70 to Lys126 is a DNA-binding region (homeobox).

Belongs to the MATA1 family. As to quaternary structure, binds DNA with a high specificity as a heterodimer of A1 and ALPHA2.

The protein resides in the nucleus. Functionally, mating type proteins are sequence specific DNA-binding proteins that act as master switches in yeast differentiation by controlling gene expression in a cell type-specific fashion. Transcriptional corepressor that, in a/alpha diploid cells, binds cooperatively with the ALPHA2 protein to a 21-bp DNA sequence termed the haploid-specific gene (hsg) operator, to repress transcription of haploid-specific genes and of MATALPHA1. This chain is Mating-type protein A1 (MATA1), found in Saccharomyces cerevisiae (Baker's yeast).